A 407-amino-acid chain; its full sequence is QYSESQESGHNRNAPDKELTTEEFQLIFHQSQTVDIEYDFINITTEMIETERKVSFTIDGKEYHLSLTPAASQSVLPYGTKIKSAIWWTDNDTHIHEEDYSDERWDSRAIYENLEIMATILVRTENGTSYYDGVFGEGIAMKVVRSLPGRLMNIYGANYHFVYDSNGSVYDVVLNGQDEPAVPADMAVNNFYPKLLVLVDYSLFKIFNENFEETVKYLTIFWNAVNLRFRPVQHPKVNIIITGIVIAKNEAAFQHVYRARYSKNSKLVHTGRVIDNGRYFFGTNFDPYYDNYDASFTMASMDDPTGKGGATVIGGICSSSNNIAYIRDVGSYSGVKVATHELGHLLNGQHDSDTTCSEKINDNIYTIMAKQGSTKASKFVWSSCTLTAFANFSKTTSAACLKDTYRK.

4 N-linked (GlcNAc...) asparagine glycosylation sites follow: Asn42, Asn91, Asn126, and Asn166. One can recognise a Peptidase M12B domain in the interval 191–405 (FYPKLLVLVD…TSAACLKDTY (215 aa)). Cystine bridges form between Cys317–Cys400 and Cys356–Cys384. His340 contacts Zn(2+). Residue Glu341 is part of the active site. The Zn(2+) site is built by His344 and His350. Residue Asn391 is glycosylated (N-linked (GlcNAc...) asparagine).

This sequence in the C-terminal section; belongs to the venom metalloproteinase (M12B) family. In terms of assembly, monomer. It depends on Zn(2+) as a cofactor. Expressed by the venom gland.

The protein resides in the secreted. With respect to regulation, the gelatinase activity is inhibited by EDTA. Its function is as follows. The recombinant protein has gelatinase activity. In vivo, injection of this recombinant into fifth instar L.oleracea (host) larvae results in partial insect mortality associated with the molt to sixth instar, with surviving insects showing retarded development and growth. The chain is Venom metalloproteinase 3 from Eulophus pennicornis (Parasitoid wasp).